We begin with the raw amino-acid sequence, 141 residues long: Single-stranded DNA-binding protein 2 (141 aa).

Residues 1–104 form the SSB domain; that stretch reads MLNRTVLVGR…VVADSVQFLE (104 aa). A disordered region spans residues 104 to 141; it reads EPKNNNQQQNNNYQQQRQTQTGNNPFDNNADSIEDLPF. Low complexity predominate over residues 107–127; it reads NNNQQQNNNYQQQRQTQTGNN.

As to quaternary structure, homotetramer.

This is Single-stranded DNA-binding protein 2 (ssb-p) from Staphylococcus aureus (strain Mu50 / ATCC 700699).